Here is a 120-residue protein sequence, read N- to C-terminus: Large ribosomal subunit protein bL19c (120 aa).

The protein belongs to the bacterial ribosomal protein bL19 family.

The protein resides in the plastid. It localises to the chloroplast. This Thalassiosira pseudonana (Marine diatom) protein is Large ribosomal subunit protein bL19c.